A 169-amino-acid polypeptide reads, in one-letter code: Cell division inhibitor SulA (169 aa).

The segment covering 1–15 (MFTSAHANRSAQASA) has biased composition (polar residues). The tract at residues 1-22 (MFTSAHANRSAQASASAGHYAH) is disordered. Residues 106–112 (ALRTGNY) are ftsZ binding. The interval 162-169 (KIHSNLYH) is lon protease binding.

The protein belongs to the SulA family. Interacts with FtsZ. In terms of processing, is rapidly cleaved and degraded by the Lon protease once DNA damage is repaired.

Functionally, component of the SOS system and an inhibitor of cell division. Accumulation of SulA causes rapid cessation of cell division and the appearance of long, non-septate filaments. In the presence of GTP, binds a polymerization-competent form of FtsZ in a 1:1 ratio, thus inhibiting FtsZ polymerization and therefore preventing it from participating in the assembly of the Z ring. This mechanism prevents the premature segregation of damaged DNA to daughter cells during cell division. The sequence is that of Cell division inhibitor SulA from Klebsiella pneumoniae (strain 342).